The sequence spans 176 residues: Shikimate kinase (176 aa).

14–19 is an ATP binding site; it reads GAGKSS. Residue Ser-18 coordinates Mg(2+). The substrate site is built by Asp-36, Arg-60, and Gly-82. An ATP-binding site is contributed by Arg-120. Residue Arg-138 participates in substrate binding.

This sequence belongs to the shikimate kinase family. Monomer. Mg(2+) serves as cofactor.

It localises to the cytoplasm. It catalyses the reaction shikimate + ATP = 3-phosphoshikimate + ADP + H(+). It functions in the pathway metabolic intermediate biosynthesis; chorismate biosynthesis; chorismate from D-erythrose 4-phosphate and phosphoenolpyruvate: step 5/7. Functionally, catalyzes the specific phosphorylation of the 3-hydroxyl group of shikimic acid using ATP as a cosubstrate. This chain is Shikimate kinase, found in Dehalococcoides mccartyi (strain ATCC BAA-2100 / JCM 16839 / KCTC 5957 / BAV1).